A 406-amino-acid polypeptide reads, in one-letter code: Argininosuccinate synthase (406 aa).

9 to 17 (AYSGGLDTS) contacts ATP. Tyr86 is an L-citrulline binding site. Gly116 is an ATP binding site. L-aspartate contacts are provided by Thr118, Asn122, and Asp123. Position 122 (Asn122) interacts with L-citrulline. L-citrulline-binding residues include Arg126, Ser174, Ser183, Glu259, and Tyr271.

It belongs to the argininosuccinate synthase family. Type 1 subfamily. As to quaternary structure, homotetramer.

It is found in the cytoplasm. The catalysed reaction is L-citrulline + L-aspartate + ATP = 2-(N(omega)-L-arginino)succinate + AMP + diphosphate + H(+). Its pathway is amino-acid biosynthesis; L-arginine biosynthesis; L-arginine from L-ornithine and carbamoyl phosphate: step 2/3. The chain is Argininosuccinate synthase from Geobacillus kaustophilus (strain HTA426).